The sequence spans 1085 residues: MKKIITLSAPPPSQFSFLSEFQFSLPELRQIQFKSYYYFIYKNLISELNIFPEIFDLNQEFQFELLNKEYKLIKPEKTTIKFHYNTYSSDLYVTCRLLRRKKKIEIQKQTIFIGSIPLIDYQSTFRINSVTRVIINQILRSPGIYYNSELDHNGISIYTGTIISDWGGRLKLEIDSKTRIWARISKKRKVSILVLLLAMGLTIKQILDSVCSSKIFLDFLKEKKKKKEHLQSTEDAMVELYKQLYYIGGDLLFSESIRKELQKKFFQQRCELGKIGRLNVNKKLSLDIPENEFFLLPQDILAAIDYLIKIKFGIGTLDDIDHLKNRRIRSVADLLQDQLKLALIRLENSVRQVMRRTTKRKRLLSPKNLITQTPLIATFKEFFGSHPLSQFLDQTNSLAEIVHKRRLSSLGPGGVTRRTAGFQVRDIHFSHYTRICPIETSEGMNAGLIASLAIHANVNNWGFLESPFYKISKNVKEEKIINLSAGEDEYYRIATGNCLALDQGTQKIQITPARYRQEFLAIAWEQIHLRSIYPLQYFSVGVSLIPFLEHNDANRALMGSNMQRQAVPLIKLEKCIVGTGLESQVALDSGNVMITKQSEKIMYTDGKKISLLNNTNETVNTHLIIYQRSNNSTCIHQKPQVISKKFLKKGQVLTDGAAILKGELTLGKNILVAYMPWEGYNFEDAILISERLIYEDIYTSIHIERYEIESRNTNQGPEKITKEIPHLENSVLRHLDKNGLVIPGSWVETGDVLVGKLTPQETEESLRAPEGKLLQAIFGIQVTNAKETCLKVPLNGKGRVIDVIWISKKENSSNYEKIIHVYIAQKRKIQVGDKVAGRHGNKGIISKILPRQDMPYLQDGTPIDMVLSPLGVPSRMNVGQIFECLLGLAGYFLGKHYRITPFDEKYEREASRKLVFSELYKASKKTGNLWLFEPENPGKSRLLNGRTGEIFEQAVTVGKAYMLKLIHQVDDKIHARSSGPYALVTQQPLRGRSRRGGQRVGEMEVWALEGFGVAYILQEMLTIKSDHIHARYEVLGAIITGEPIPKPKTAPESFLLLVRELRSLSLELDHAVIFEKNLNIKFKDV.

It belongs to the RNA polymerase beta chain family. In terms of assembly, in plastids the minimal PEP RNA polymerase catalytic core is composed of four subunits: alpha, beta, beta', and beta''. When a (nuclear-encoded) sigma factor is associated with the core the holoenzyme is formed, which can initiate transcription.

It localises to the plastid. The protein resides in the chloroplast. The enzyme catalyses RNA(n) + a ribonucleoside 5'-triphosphate = RNA(n+1) + diphosphate. Functionally, DNA-dependent RNA polymerase catalyzes the transcription of DNA into RNA using the four ribonucleoside triphosphates as substrates. The sequence is that of DNA-directed RNA polymerase subunit beta from Physcomitrium patens (Spreading-leaved earth moss).